Reading from the N-terminus, the 224-residue chain is Uridylate kinase (224 aa).

Position 9–10 (9–10) interacts with ATP; the sequence is GS. Glycine 43 contributes to the UMP binding site. 2 residues coordinate ATP: glycine 44 and arginine 48. UMP contacts are provided by residues aspartate 65 and 113-119; that span reads TEPAHST. The ATP site is built by threonine 139, tyrosine 145, and aspartate 148.

This sequence belongs to the UMP kinase family. As to quaternary structure, homohexamer.

Its subcellular location is the cytoplasm. It catalyses the reaction UMP + ATP = UDP + ADP. The protein operates within pyrimidine metabolism; CTP biosynthesis via de novo pathway; UDP from UMP (UMPK route): step 1/1. Inhibited by UTP. In terms of biological role, catalyzes the reversible phosphorylation of UMP to UDP. In Methanothermobacter thermautotrophicus (strain ATCC 29096 / DSM 1053 / JCM 10044 / NBRC 100330 / Delta H) (Methanobacterium thermoautotrophicum), this protein is Uridylate kinase.